Here is a 255-residue protein sequence, read N- to C-terminus: Ribonuclease HII (255 aa).

The RNase H type-2 domain occupies 73–255; sequence LYIGGIDEAG…HRKSFLKNIL (183 aa). A divalent metal cation is bound by residues Asp79, Glu80, and Asp171.

The protein belongs to the RNase HII family. Mn(2+) is required as a cofactor. Requires Mg(2+) as cofactor.

The protein resides in the cytoplasm. It catalyses the reaction Endonucleolytic cleavage to 5'-phosphomonoester.. In terms of biological role, endonuclease that specifically degrades the RNA of RNA-DNA hybrids. This Clostridioides difficile (strain 630) (Peptoclostridium difficile) protein is Ribonuclease HII.